The following is a 421-amino-acid chain: Zinc finger protein 57 (421 aa).

The KRAB domain maps to 15 to 88 (VSYEDVAVSF…SCTGVFKGGP (74 aa)). The segment at 90–113 (FFCLTCGKCFKKNTFLFNHQFPVR) adopts a C2H2-type 1; degenerate zinc-finger fold. 2 consecutive C2H2-type zinc fingers follow at residues 140 to 162 (FFCNFCGKTYRDASGLSRHRRAH) and 168 to 190 (RSCPECGKCFRDQSEVNRHLKVH). Positions 191–221 (QNKPAASNQAGNQASNQRLKSRVPPTTPRSQ) are disordered. A compositionally biased stretch (low complexity) spans 195–207 (AASNQAGNQASNQ). Residues 264–286 (ISCPYCHITFTMRTCLLTHLKIH) form a C2H2-type 4 zinc finger. A C2H2-type 5; degenerate zinc finger spans residues 313–332 (YTCPVCDSSFRGKESLLDHL). Positions 371 to 421 (GKRMESRRRRRKRACTENPETEGLSGKGRVAPWEMEGATSPESPVTEEDSD) are disordered.

The protein belongs to the krueppel C2H2-type zinc-finger protein family. As to expression, expressed in oocytes and in a subset of adult tissues. Expressed at high levels in testis, and at low levels in cerebellum. Present in sciatic nerve and spinal cord (at protein level).

The protein localises to the nucleus. Functionally, transcription regulator required to maintain maternal and paternal gene imprinting, a process by which gene expression is restricted in a parent of origin-specific manner by epigenetic modification of genomic DNA and chromatin, including DNA methylation. Acts by controlling DNA methylation during the earliest multicellular stages of development at multiple imprinting control regions (ICRs). Acts together with ZNF445, but ZFP57 plays the predominant role in imprinting maintenance. In contrast, in humans, ZNF445 seems to be the major factor early embryonic imprinting maintenance. Required for the establishment of maternal methylation imprints at SNRPN locus. Acts as a transcriptional repressor in Schwann cells. Binds to a 5'-TGCCGC-3' consensus sequence and recognizes the methylated CpG within this element. In Mus musculus (Mouse), this protein is Zinc finger protein 57 (Zfp57).